The chain runs to 492 residues: Catalase isozyme 2 (492 aa).

Catalysis depends on residues H65 and N138. Position 348 (Y348) interacts with heme.

It belongs to the catalase family. Homotetramer. Requires heme as cofactor.

It is found in the peroxisome. It carries out the reaction 2 H2O2 = O2 + 2 H2O. Occurs in almost all aerobically respiring organisms and serves to protect cells from the toxic effects of hydrogen peroxide. The polypeptide is Catalase isozyme 2 (CAT2) (Gossypium hirsutum (Upland cotton)).